The primary structure comprises 95 residues: MNLKPLADRVIVKPSPAEEKTKGGLYIPDSGKEKPQHGEVVAVGPGKAADNGTVVAMEVQVGQKVLYGKYSGTEVTVDGEDYLIMRESDIFAIIG.

Positions 12-22 (VKPSPAEEKTK) are enriched in basic and acidic residues. The tract at residues 12–38 (VKPSPAEEKTKGGLYIPDSGKEKPQHG) is disordered.

The protein belongs to the GroES chaperonin family. As to quaternary structure, heptamer of 7 subunits arranged in a ring. Interacts with the chaperonin GroEL.

It localises to the cytoplasm. Together with the chaperonin GroEL, plays an essential role in assisting protein folding. The GroEL-GroES system forms a nano-cage that allows encapsulation of the non-native substrate proteins and provides a physical environment optimized to promote and accelerate protein folding. GroES binds to the apical surface of the GroEL ring, thereby capping the opening of the GroEL channel. In Chloroherpeton thalassium (strain ATCC 35110 / GB-78), this protein is Co-chaperonin GroES.